The primary structure comprises 243 residues: Phosphoribosylaminoimidazole-succinocarboxamide synthase (243 aa).

Belongs to the SAICAR synthetase family.

It catalyses the reaction 5-amino-1-(5-phospho-D-ribosyl)imidazole-4-carboxylate + L-aspartate + ATP = (2S)-2-[5-amino-1-(5-phospho-beta-D-ribosyl)imidazole-4-carboxamido]succinate + ADP + phosphate + 2 H(+). It participates in purine metabolism; IMP biosynthesis via de novo pathway; 5-amino-1-(5-phospho-D-ribosyl)imidazole-4-carboxamide from 5-amino-1-(5-phospho-D-ribosyl)imidazole-4-carboxylate: step 1/2. The sequence is that of Phosphoribosylaminoimidazole-succinocarboxamide synthase from Thermosynechococcus vestitus (strain NIES-2133 / IAM M-273 / BP-1).